We begin with the raw amino-acid sequence, 153 residues long: UPF0768 protein PB2B2.18 (153 aa).

Belongs to the UPF0768 family.

In Schizosaccharomyces pombe (strain 972 / ATCC 24843) (Fission yeast), this protein is UPF0768 protein PB2B2.18.